The sequence spans 978 residues: Tyrosine-protein kinase transforming protein fms (978 aa).

The Extracellular portion of the chain corresponds to 1–543 (RMPSGPGHYG…IGAHTPLPDE (543 aa)). 5 consecutive Ig-like C2-type domains span residues 55–134 (PVIQ…IHLY), 141–231 (PWKV…KVQK), 236–331 (PATL…RVVE), 333–431 (AYSN…LTLR), and 434–533 (PEVR…WPIS). A disulfide bond links Cys76 and Cys118. N-linked (GlcNAc...) asparagine; by host glycosylation is found at Asn79, Asn107, Asn128, Asn187, Asn309, Asn320, Asn336, Asn369, Asn444, Asn511, and Asn524. Intrachain disulfides connect Cys161-Cys211 and Cys258-Cys312. Cys451 and Cys516 are disulfide-bonded. A helical transmembrane segment spans residues 544–568 (LLFTPVLLTCMSIMALLLLLLLLLL). Topologically, residues 569 to 978 (YKYKQKPKYQ…PWQRTPPVAR (410 aa)) are cytoplasmic. Residues 613-942 (LQFGKTLGTG…PTFQQICSLL (330 aa)) form the Protein kinase domain. ATP contacts are provided by residues 619–627 (LGTGAFGKV) and Lys647. Asp810 (proton acceptor) is an active-site residue. Residue Tyr841 is modified to Phosphotyrosine; by autocatalysis. The disordered stretch occupies residues 952-978 (VPNYTNLPSSSSSRLLRPWQRTPPVAR). The span at 958–969 (LPSSSSSRLLRP) shows a compositional bias: low complexity. Thr973 is subject to Phosphothreonine.

Belongs to the protein kinase superfamily. Tyr protein kinase family. CSF-1/PDGF receptor subfamily.

The protein localises to the membrane. It carries out the reaction L-tyrosyl-[protein] + ATP = O-phospho-L-tyrosyl-[protein] + ADP + H(+). Its function is as follows. Truncated version of the receptor for colony-stimulating factor 1 (CSF-1). The sequence is that of Tyrosine-protein kinase transforming protein fms (V-FMS) from Felidae (cat family).